Reading from the N-terminus, the 193-residue chain is MAAIRKKLVIVGDGACGKTCLLIVFSKDQFPEVYVPTVFENYVADIEVDGKQVELALWDTAGQEDYDRLRPLSYPDTDVILMCFSIDSPDSLENIPEKWTPEVKHFCPNVPIILVGNKKDLRNDEHTRRELAKMKQEPVKPEEGRDMANRIGAFGYMECSAKTKDGVREVFEMATRAALQARRGKKKSGCLIL.

GTP is bound by residues 12-19 (GDGACGKT), 30-37 (FPEVYVPT), 59-63 (DTAGQ), and 117-120 (NKKD). The Effector region signature appears at 34 to 42 (YVPTVFENY). Residues 61 to 78 (AGQEDYDRLRPLSYPDTD) are switch II region; involved in RAP1GDS1 isoform 3 binding. Gln-63 is subject to 5-glutamyl serotonin. Residue Lys-135 forms a Glycyl lysine isopeptide (Lys-Gly) (interchain with G-Cter in ubiquitin) linkage. 160–162 (SAK) is a binding site for GTP. The residue at position 188 (Ser-188) is a Phosphoserine; by PKG/PRKG1. Cysteine methyl ester is present on Cys-190. Cys-190 carries S-geranylgeranyl cysteine lipidation. Positions 191 to 193 (LIL) are cleaved as a propeptide — removed in mature form.

This sequence belongs to the small GTPase superfamily. Rho family. As to quaternary structure, interacts with ARHGEF28. Interacts (via GTP-bound form) with RIPOR1 (via N-terminus); this interaction links RHOA to STK24 and STK26 kinases. Interacts with RIPOR2 (via active GTP- or inactive GDP-bound forms) isoform 1 and isoform 2; these interactions are direct, block the loading of GTP to RHOA and decrease upon chemokine CCL19 stimulation in primary T lymphocytes. Binds PRKCL1, ROCK1 and ROCK2. Interacts with ARHGEF2, ARHGEF3, NET1 and RTKN. Interacts with PLCE1 and AKAP13. Interacts with DIAPH1. Interacts (in the constitutively activated, GTP-bound form) with DGKQ. Interacts with RACK1; enhances RHOA activation. Interacts with PKP4; the interaction is detected at the midbody. Interacts (GTP-bound form preferentially) with PKN2; the interaction stimulates autophosphorylation and phosphorylation of PKN2. Interacts with ARHGDIA; this interaction inactivates and stabilizes RHOA. Interacts with ARHGDIB. Interacts (GTP-bound form) with KCNA2 (via cytoplasmic N-terminal domain). Interacts (GTP-bound form) with ECT2; the interaction results in allosteric activation of ECT2. Interacts with RAP1GDS1; the interaction is direct and in a 1:1 stoichiometry. Ubiquitinated by the BCR(KCTD13) and BCR(TNFAIP1) E3 ubiquitin ligase complexes, leading to its degradation by the proteasome, thereby regulating the actin cytoskeleton and synaptic transmission in neurons. Ubiquitinated at Lys-135 in a FBXL19-mediated manner; leading to proteasomal degradation. Post-translationally, phosphorylation by PRKG1 at Ser-188 inactivates RHOA signaling. Phosphorylation by SLK at Ser-188 in response to AGTR2 activation. In terms of processing, serotonylation of Gln-63 by TGM2 during activation and aggregation of platelets leads to constitutive activation of GTPase activity.

It is found in the cell membrane. The protein localises to the cytoplasm. It localises to the cytoskeleton. The protein resides in the cleavage furrow. Its subcellular location is the cell cortex. It is found in the midbody. The protein localises to the cell projection. It localises to the lamellipodium. The protein resides in the dendrite. Its subcellular location is the nucleus. It catalyses the reaction GTP + H2O = GDP + phosphate + H(+). Its activity is regulated as follows. Regulated by guanine nucleotide exchange factors (GEFs) which promote the exchange of bound GDP for free GTP, GTPase activating proteins (GAPs) which increase the GTP hydrolysis activity and GDP dissociation inhibitors which inhibit the dissociation of the nucleotide from the GTPase. Activated by GEFs such as ARHGEF2, ARHGEF3, ARHGEF28 and BCR. Inhibited by GAPs such as ARHGAP30. Inhibited by GDP dissociation inhibitors such as ARHGDIA. Its function is as follows. Small GTPase which cycles between an active GTP-bound and an inactive GDP-bound state. Mainly associated with cytoskeleton organization, in active state binds to a variety of effector proteins to regulate cellular responses such as cytoskeletal dynamics, cell migration and cell cycle. Regulates a signal transduction pathway linking plasma membrane receptors to the assembly of focal adhesions and actin stress fibers. Involved in a microtubule-dependent signal that is required for the myosin contractile ring formation during cell cycle cytokinesis. Plays an essential role in cleavage furrow formation. Required for the apical junction formation of keratinocyte cell-cell adhesion. Essential for the SPATA13-mediated regulation of cell migration and adhesion assembly and disassembly. The MEMO1-RHOA-DIAPH1 signaling pathway plays an important role in ERBB2-dependent stabilization of microtubules at the cell cortex. It controls the localization of APC and CLASP2 to the cell membrane, via the regulation of GSK3B activity. In turn, membrane-bound APC allows the localization of the MACF1 to the cell membrane, which is required for microtubule capture and stabilization. Regulates KCNA2 potassium channel activity by reducing its location at the cell surface in response to CHRM1 activation; promotes KCNA2 endocytosis. Acts as an allosteric activator of guanine nucleotide exchange factor ECT2 by binding in its activated GTP-bound form to the PH domain of ECT2 which stimulates the release of PH inhibition and promotes the binding of substrate RHOA to the ECT2 catalytic center. May be an activator of PLCE1. In neurons, involved in the inhibition of the initial spine growth. Upon activation by CaMKII, modulates dendritic spine structural plasticity by relaying CaMKII transient activation to synapse-specific, long-term signaling. Acts as a regulator of platelet alpha-granule release during activation and aggregation of platelets. When activated by DAAM1 may signal centrosome maturation and chromosomal segregation during cell division. May also be involved in contractile ring formation during cytokinesis. The chain is Transforming protein RhoA (Rhoa) from Mus musculus (Mouse).